Reading from the N-terminus, the 271-residue chain is DNA repair protein RecO (271 aa).

The protein belongs to the RecO family.

In terms of biological role, involved in DNA repair and RecF pathway recombination. The polypeptide is DNA repair protein RecO (Rhodococcus erythropolis (strain PR4 / NBRC 100887)).